The sequence spans 250 residues: Ditrans,polycis-undecaprenyl-diphosphate synthase ((2E,6E)-farnesyl-diphosphate specific) (250 aa).

Asp-20 is a catalytic residue. Residue Asp-20 coordinates Mg(2+). Substrate-binding positions include 21–24 (GNGR), Trp-25, Arg-33, His-37, and 65–67 (SSE). Catalysis depends on Asn-68, which acts as the Proton acceptor. Residues Trp-69, Arg-71, Arg-188, and 194 to 196 (RIS) each bind substrate. Glu-207 lines the Mg(2+) pocket.

This sequence belongs to the UPP synthase family. In terms of assembly, homodimer. Requires Mg(2+) as cofactor.

It catalyses the reaction 8 isopentenyl diphosphate + (2E,6E)-farnesyl diphosphate = di-trans,octa-cis-undecaprenyl diphosphate + 8 diphosphate. Its function is as follows. Catalyzes the sequential condensation of isopentenyl diphosphate (IPP) with (2E,6E)-farnesyl diphosphate (E,E-FPP) to yield (2Z,6Z,10Z,14Z,18Z,22Z,26Z,30Z,34E,38E)-undecaprenyl diphosphate (di-trans,octa-cis-UPP). UPP is the precursor of glycosyl carrier lipid in the biosynthesis of bacterial cell wall polysaccharide components such as peptidoglycan and lipopolysaccharide. The chain is Ditrans,polycis-undecaprenyl-diphosphate synthase ((2E,6E)-farnesyl-diphosphate specific) from Vibrio cholerae serotype O1 (strain ATCC 39315 / El Tor Inaba N16961).